The following is a 473-amino-acid chain: GTPase Der (473 aa).

EngA-type G domains lie at 5 to 170 (PVVA…PEDV) and 178 to 351 (LKLA…ASSM). GTP contacts are provided by residues 11–18 (GRPNVGKS), 58–62 (DTGGI), 123–126 (NKID), 184–191 (GRPNVGKS), 231–235 (DTAGV), and 296–299 (NKWD). Residues 352–436 (FKVSTNRLTQ…PLKVEFKLNT (85 aa)) enclose the KH-like domain. The tract at residues 438–473 (PYAGKKTTSSKKLRPGVSEARQKRRNMKYKKGSHKK) is disordered. Over residues 459–473 (QKRRNMKYKKGSHKK) the composition is skewed to basic residues.

The protein belongs to the TRAFAC class TrmE-Era-EngA-EngB-Septin-like GTPase superfamily. EngA (Der) GTPase family. In terms of assembly, associates with the 50S ribosomal subunit.

Its function is as follows. GTPase that plays an essential role in the late steps of ribosome biogenesis. This Psychrobacter sp. (strain PRwf-1) protein is GTPase Der.